A 407-amino-acid chain; its full sequence is Histone-lysine N-methyltransferase SUV39H2 (407 aa).

A Chromo domain is found at 43–101 (YEVEYLCDYKVEEGKEYYLVKWKGWPESSNTWEPQKNLKCPKLLENFLSDKDEYLSRMK). The 59-residue stretch at 185–243 (TGCECSDCPAEKCCPKEAGFILAYNKQKKLKIQPGLPIYECNSFCRCGPDCPNRIVQKG) folds into the Pre-SET domain. The Zn(2+) site is built by Cys-187, Cys-189, Cys-192, Cys-197, Cys-198, Cys-225, Cys-229, Cys-231, and Cys-235. An SET domain is found at 246–369 (YSLCIFRTNN…AGEELTFDYQ (124 aa)). S-adenosyl-L-methionine contacts are provided by residues 257–259 (RGW), Tyr-300, and 326–327 (NH). Positions 329, 395, 397, and 402 each coordinate Zn(2+). A Post-SET domain is found at 391–407 (IRTVCKCGAVCCRGYLN).

It belongs to the class V-like SAM-binding methyltransferase superfamily. Histone-lysine methyltransferase family. Suvar3-9 subfamily.

It localises to the nucleus. The protein localises to the chromosome. The protein resides in the centromere. It catalyses the reaction L-lysyl(9)-[histone H3] + 3 S-adenosyl-L-methionine = N(6),N(6),N(6)-trimethyl-L-lysyl(9)-[histone H3] + 3 S-adenosyl-L-homocysteine + 3 H(+). Histone methyltransferase that specifically trimethylates 'Lys-9' of histone H3 using monomethylated H3 'Lys-9' as substrate. H3 'Lys-9' trimethylation represents a specific tag for epigenetic transcriptional repression by recruiting HP1 (CBX1, CBX3 and/or CBX5) proteins to methylated histones. Mainly functions in heterochromatin regions, thereby playing a central role in the establishment of constitutive heterochromatin at pericentric and telomere regions. H3 'Lys-9' trimethylation is also required to direct DNA methylation at pericentric repeats. SUV39H1 is targeted to histone H3 via its interaction with RB1 and is involved in many processes. This chain is Histone-lysine N-methyltransferase SUV39H2 (SUV39H2), found in Gallus gallus (Chicken).